Consider the following 236-residue polypeptide: Snake venom serine protease ussurin (236 aa).

In terms of domain architecture, Peptidase S1 spans 1-227 (VIGGVECNIN…YTDWIQSIIS (227 aa)). A disulfide bridge connects residues C28 and C44. Residues H43 and D88 each act as charge relay system in the active site. N99 and N100 each carry an N-linked (GlcNAc...) asparagine glycan. 3 disulfide bridges follow: C120–C188, C152–C167, and C178–C203. Catalysis depends on S182, which acts as the Charge relay system.

The protein belongs to the peptidase S1 family. Snake venom subfamily. As to quaternary structure, monomer. As to expression, expressed by the venom gland.

Its subcellular location is the secreted. Its function is as follows. Snake venom serine protease that may act in the hemostasis system of the prey. In Gloydius ussuriensis (Ussuri mamushi), this protein is Snake venom serine protease ussurin.